The following is a 136-amino-acid chain: DNA-binding protein H-NS (136 aa).

A coiled-coil region spans residues 13-67 (TLRAQARECTLETLEEMLEKLEVVVNERREEDSQAQAEIEERTRKLQQYREMLIA). A DNA-binding region spans residues 113 to 118 (QGRTPA).

Belongs to the histone-like protein H-NS family. As to quaternary structure, interacts with YmoA in the absence of DNA. Homodimer that oligomerizes on DNA into higher-order complexes that form bridges between disparate regions of DNA compacting it. Interacts with YmoA.

It localises to the cytoplasm. Its subcellular location is the nucleoid. Its function is as follows. A DNA-binding protein implicated in transcriptional repression and chromosome organization and compaction. Binds nucleation sites in AT-rich DNA and bridges them, forming higher-order nucleoprotein complexes and condensing the chromosome. As many horizontally transferred genes are AT-rich, it plays a central role in silencing foreign genes. A subset of genes are repressed by H-NS in association with YmoA. Complements a number of hns deficiencies in E.coli; represses the bgl operon, represses hemolysin expression. In Yersinia enterocolitica, this protein is DNA-binding protein H-NS.